The primary structure comprises 486 residues: Ribosomal RNA small subunit methyltransferase F (486 aa).

Residues 124–130 (ASAPGSK), Glu-148, Asp-175, and Asp-193 each bind S-adenosyl-L-methionine. Cys-246 (nucleophile) is an active-site residue.

This sequence belongs to the class I-like SAM-binding methyltransferase superfamily. RsmB/NOP family.

It localises to the cytoplasm. It carries out the reaction cytidine(1407) in 16S rRNA + S-adenosyl-L-methionine = 5-methylcytidine(1407) in 16S rRNA + S-adenosyl-L-homocysteine + H(+). Specifically methylates the cytosine at position 1407 (m5C1407) of 16S rRNA. This chain is Ribosomal RNA small subunit methyltransferase F, found in Shewanella baltica (strain OS185).